The primary structure comprises 273 residues: uncharacterized protein (273 aa).

The helical transmembrane segment at 7 to 27 (LTLGICLVLLIILIVGYVIMT) threads the bilayer.

Belongs to the staphylococcal tandem lipoprotein family.

The protein localises to the cell membrane. This is an uncharacterized protein from Staphylococcus aureus (strain MSSA476).